The primary structure comprises 630 residues: Sodium-dependent serotonin transporter (630 aa).

2 stretches are compositionally biased toward polar residues: residues 1–11 (METTPLNSQKV) and 42–55 (QISNGYSAVPSTSA). Positions 1-63 (METTPLNSQK…SAGDEAPHST (63 aa)) are disordered. At 1-87 (METTPLNSQK…ERETWGKKMD (87 aa)) the chain is on the cytoplasmic side. Tyrosine 47 carries the post-translational modification Phosphotyrosine. The helical transmembrane segment at 88-112 (FLLSVIGYAVDLGNIWRFPYICYQN) threads the bilayer. Na(+) is bound by residues glycine 94, alanine 96, valine 97, aspartate 98, and asparagine 101. A serotonin-binding site is contributed by aspartate 98. The Extracellular segment spans residues 113 to 115 (GGG). The chain crosses the membrane as a helical span at residues 116–135 (AFLLPYTIMAIFGGIPLFYM). At 136 to 160 (ELALGQYHRNGCISIWKKICPIFKG) the chain is on the cytoplasmic side. Residue tyrosine 142 is modified to Phosphotyrosine. A helical transmembrane segment spans residues 161–186 (IGYAICIIAFYIASYYNTIIAWALYY). Residues 187-252 (LISSFTDQLP…KGLQDLGTIS (66 aa)) lie on the Extracellular side of the membrane. Cysteines 200 and 209 form a disulfide. Residues asparagine 208 and asparagine 217 are each glycosylated (N-linked (GlcNAc...) asparagine). A helical transmembrane segment spans residues 253-271 (WQLALCIMLIFTIIYFSIW). At 272–277 (KGVKTS) the chain is on the cytoplasmic side. Phosphothreonine is present on threonine 276. A helical membrane pass occupies residues 278 to 297 (GKVVWVTATFPYIVLSVLLV). The Extracellular segment spans residues 298 to 324 (RGATLPGAWRGVVFYLKPNWQKLLETG). Residues 325-347 (VWVDAAAQIFFSLGPGFGVLLAF) traverse the membrane as a helical segment. A Na(+)-binding site is contributed by serine 336. At 348 to 360 (ASYNKFNNNCYQD) the chain is on the cytoplasmic side. Residues 361–380 (ALVTSVVNCMTSFVSGFVIF) form a helical membrane-spanning segment. Asparagine 368 serves as a coordination point for Na(+). The Extracellular segment spans residues 381–421 (TVLGYMAEMRNEDVSEVAKDAGPSLLFITYAEAIANMPAST). A helical transmembrane segment spans residues 422 to 443 (FFAIIFFLMLITLGLDSTFAGL). Na(+) contacts are provided by leucine 434, aspartate 437, and serine 438. Threonine 439 contributes to the serotonin binding site. Residues 444-463 (EGVITAVLDEFPHIWAKRRE) lie on the Cytoplasmic side of the membrane. The chain crosses the membrane as a helical span at residues 464–483 (WFVLIVVITCILGSLLTLTS). Residues 484-494 (GGAYVVTLLEE) are Extracellular-facing. Residues glutamate 494 and tyrosine 495 each coordinate serotonin. Residues 495-516 (YATGPAVLTVALIEAVVVSWFY) form a helical membrane-spanning segment. The Cytoplasmic segment spans residues 517–538 (GITQFCSDVKEMLGFSPGWFWR). Residues 539–558 (ICWVAISPLFLLFIICSFLM) traverse the membrane as a helical segment. Positions 556 and 559 each coordinate serotonin. Residues 559-574 (SPPQLRLFQYNYPHWS) lie on the Extracellular side of the membrane. The chain crosses the membrane as a helical span at residues 575–595 (IILGYCIGTSSVICIPIYIIY). Topologically, residues 596–630 (RLISTPGTLKERIIKSITPETPTEIPCGDIRMNAV) are cytoplasmic. Positions 616–624 (TPTEIPCGD) are interaction with RAB4A.

Belongs to the sodium:neurotransmitter symporter (SNF) (TC 2.A.22) family. SLC6A4 subfamily. As to quaternary structure, monomer or homooligomer. Interacts (via C-terminus) with SCAMP2; the interaction is direct and retains transporter molecules intracellularly. Interacts with filamentous actin and STX1A. Interacts (via the N-terminus) with STX1A (via the H3 domain); this interaction regulates SLC4A6 channel conductance. Interacts with SEC23A, SEC24C and PATJ. Interacts with NOS1; the interaction may diminish the cell surface localization of SERT in the brain and, correspondingly, reduce serotonin reuptake. Interacts with TGFB1I1. Interacts with ITGAV:ITGB3. Interacts (via C-terminus) with ITGB3; this interaction regulates SLC6A4 trafficking. Post-translationally, phosphorylation at Thr-276 increases 5-HT uptake and is required for cGMP-mediated SERT regulation. In terms of tissue distribution, expressed in the lung, midbrain and brainstem regions. Expressed in brainstem raphe neurons.

The protein resides in the cell membrane. The protein localises to the endomembrane system. It is found in the endosome membrane. Its subcellular location is the synapse. It localises to the cell junction. The protein resides in the focal adhesion. The protein localises to the cell projection. It is found in the neuron projection. It carries out the reaction serotonin(out) + K(+)(in) + Na(+)(out) + H(+)(in) = serotonin(in) + K(+)(out) + Na(+)(in) + H(+)(out). Serotonin transporter that cotransports serotonin with one Na(+) ion in exchange for one K(+) ion and possibly one proton in an overall electroneutral transport cycle. Transports serotonin across the plasma membrane from the extracellular compartment to the cytosol thus limiting serotonin intercellular signaling. Essential for serotonin homeostasis in the central nervous system. In the developing somatosensory cortex, acts in glutamatergic neurons to control serotonin uptake and its trophic functions accounting for proper spatial organization of cortical neurons and elaboration of sensory circuits. In the mature cortex, acts primarily in brainstem raphe neurons to mediate serotonin uptake from the synaptic cleft back into the pre-synaptic terminal thus terminating serotonin signaling at the synapse. Modulates mucosal serotonin levels in the gastrointestinal tract through uptake and clearance of serotonin in enterocytes. Required for enteric neurogenesis and gastrointestinal reflexes. Regulates blood serotonin levels by ensuring rapid high affinity uptake of serotonin from plasma to platelets, where it is further stored in dense granules via vesicular monoamine transporters and then released upon stimulation. Mechanistically, the transport cycle starts with an outward-open conformation having Na1(+) and Cl(-) sites occupied. The binding of a second extracellular Na2(+) ion and serotonin substrate leads to structural changes to outward-occluded to inward-occluded to inward-open, where the Na2(+) ion and serotonin are released into the cytosol. Binding of intracellular K(+) ion induces conformational transitions to inward-occluded to outward-open and completes the cycle by releasing K(+) possibly together with a proton bound to Asp-98 into the extracellular compartment. Na1(+) and Cl(-) ions remain bound throughout the transport cycle. Additionally, displays serotonin-induced channel-like conductance for monovalent cations, mainly Na(+) ions. The channel activity is uncoupled from the transport cycle and may contribute to the membrane resting potential or excitability. The sequence is that of Sodium-dependent serotonin transporter from Mus musculus (Mouse).